Here is a 284-residue protein sequence, read N- to C-terminus: Protein-S-isoprenylcysteine O-methyltransferase (284 aa).

Residues 1–16 (MAGCAARVPPGSEARL) are Cytoplasmic-facing. A helical membrane pass occupies residues 17 to 33 (SLATFLLGASVLALPLL). Residues 34–41 (TRAGLQGR) lie on the Lumenal side of the membrane. The helical transmembrane segment at 42 to 59 (TGLALYVAGLNALLLLLY) threads the bilayer. The Cytoplasmic portion of the chain corresponds to 60–69 (RPPRYQIAIR). A helical transmembrane segment spans residues 70-87 (ACFLGFVFGCGVLLSFSQ). Residues 88 to 92 (SSWNH) lie on the Lumenal side of the membrane. A helical transmembrane segment spans residues 93–112 (FGWYVCSLSLFHYSEYLVTA). The Cytoplasmic portion of the chain corresponds to 113–131 (VNNPKSLSLDSFLLNHSLE). The helical transmembrane segment at 132–149 (YTVAALSSWIEFTLENIF) threads the bilayer. Residues 150–154 (WPELK) are Lumenal-facing. Residues 155-174 (QITWLSAAGLLMVIFGECLR) form a helical membrane-spanning segment. Over 175-212 (KVAMFTAGSNFNHVVQSEKSDTHTLVTSGVYAWCRHPS) the chain is Cytoplasmic. Residues Q190, 197–200 (HTLV), Y205, and 210–213 (HPSY) each bind S-adenosyl-L-methionine. Residues 213-228 (YVGWFYWSIGTQVMLC) form a helical membrane-spanning segment. N229 is a topological domain (lumenal). The helical transmembrane segment at 230–244 (PICGVVYALTVWRFF) threads the bilayer. Topologically, residues 245-284 (RDRTEEEEISLIHFFGEEYLDYKKRVPTGLPFIKGVKVGL) are cytoplasmic. Substrate is bound at residue R247. An S-adenosyl-L-methionine-binding site is contributed by E251.

The protein belongs to the class VI-like SAM-binding methyltransferase superfamily. Isoprenylcysteine carboxyl methyltransferase family.

The protein resides in the endoplasmic reticulum membrane. The enzyme catalyses [protein]-C-terminal S-[(2E,6E)-farnesyl]-L-cysteine + S-adenosyl-L-methionine = [protein]-C-terminal S-[(2E,6E)-farnesyl]-L-cysteine methyl ester + S-adenosyl-L-homocysteine. In terms of biological role, catalyzes the post-translational methylation of isoprenylated C-terminal cysteine residues. This chain is Protein-S-isoprenylcysteine O-methyltransferase, found in Rattus norvegicus (Rat).